Consider the following 114-residue polypeptide: UPF0102 protein jhp_0762 (114 aa).

The protein belongs to the UPF0102 family.

The protein is UPF0102 protein jhp_0762 of Helicobacter pylori (strain J99 / ATCC 700824) (Campylobacter pylori J99).